Here is a 549-residue protein sequence, read N- to C-terminus: Glucose-6-phosphate isomerase (549 aa).

The active-site Proton donor is the glutamate 353. Residues histidine 384 and lysine 513 contribute to the active site.

It belongs to the GPI family.

The protein localises to the cytoplasm. The catalysed reaction is alpha-D-glucose 6-phosphate = beta-D-fructose 6-phosphate. It functions in the pathway carbohydrate biosynthesis; gluconeogenesis. It participates in carbohydrate degradation; glycolysis; D-glyceraldehyde 3-phosphate and glycerone phosphate from D-glucose: step 2/4. In terms of biological role, catalyzes the reversible isomerization of glucose-6-phosphate to fructose-6-phosphate. The sequence is that of Glucose-6-phosphate isomerase from Brucella canis (strain ATCC 23365 / NCTC 10854 / RM-666).